The following is a 796-amino-acid chain: Lon protease 2 (796 aa).

Residues 9–206 (LPIVILKENV…KLIVNLSIEI (198 aa)) form the Lon N-terminal domain. Residue 352–359 (GPPGIGKT) coordinates ATP. In terms of domain architecture, Lon proteolytic spans 617–796 (IDSSGFVYGL…EEVFDYLNII (180 aa)). Catalysis depends on residues S702 and K745.

It belongs to the peptidase S16 family. In terms of assembly, homohexamer. Organized in a ring with a central cavity.

Its subcellular location is the cytoplasm. The catalysed reaction is Hydrolysis of proteins in presence of ATP.. In terms of biological role, ATP-dependent serine protease that mediates the selective degradation of mutant and abnormal proteins as well as certain short-lived regulatory proteins. Required for cellular homeostasis and for survival from DNA damage and developmental changes induced by stress. Degrades polypeptides processively to yield small peptide fragments that are 5 to 10 amino acids long. Binds to DNA in a double-stranded, site-specific manner. This is Lon protease 2 (lon2) from Borreliella burgdorferi (strain ATCC 35210 / DSM 4680 / CIP 102532 / B31) (Borrelia burgdorferi).